A 715-amino-acid polypeptide reads, in one-letter code: Fatty acid oxidation complex subunit alpha (715 aa).

Residues 1 to 190 (MTTTSAFMLN…KAGLVDDVVP (190 aa)) are enoyl-CoA hydratase. The tract at residues 306 to 715 (GPLNSVGILG…WTNGETDQGN (410 aa)) is 3-hydroxyacyl-CoA dehydrogenase.

The protein in the N-terminal section; belongs to the enoyl-CoA hydratase/isomerase family. This sequence in the central section; belongs to the 3-hydroxyacyl-CoA dehydrogenase family. In terms of assembly, heterotetramer of two alpha chains (FadJ) and two beta chains (FadI).

It localises to the cytoplasm. The catalysed reaction is a (3S)-3-hydroxyacyl-CoA = a (2E)-enoyl-CoA + H2O. It catalyses the reaction a 4-saturated-(3S)-3-hydroxyacyl-CoA = a (3E)-enoyl-CoA + H2O. The enzyme catalyses a (3S)-3-hydroxyacyl-CoA + NAD(+) = a 3-oxoacyl-CoA + NADH + H(+). It carries out the reaction (3S)-3-hydroxybutanoyl-CoA = (3R)-3-hydroxybutanoyl-CoA. It participates in lipid metabolism; fatty acid beta-oxidation. Functionally, catalyzes the formation of a hydroxyacyl-CoA by addition of water on enoyl-CoA. Also exhibits 3-hydroxyacyl-CoA epimerase and 3-hydroxyacyl-CoA dehydrogenase activities. This is Fatty acid oxidation complex subunit alpha from Salmonella dublin (strain CT_02021853).